We begin with the raw amino-acid sequence, 120 residues long: Secreted effector PIT2 (120 aa).

Positions 1–25 are cleaved as a signal peptide; that stretch reads MLFRSAFVLLIVAFASACLVQHVQA. The tract at residues 46-59 is PID14 protease inhibitor domain; sequence KLNRRWWFGFTGSL.

Interacts with host cysteine proteases CP1A, CP1B, XCP2 and CP2. Post-translationally, cleaved by host target papain-like cysteine proteases (PLCPs) to release the embedded inhibitor peptide PID14.

It is found in the secreted. Functionally, secreted effector required for virulence. Functions as an inhibitor of a set of apoplastic maize papain-like cysteine proteases (PLCPs) including CP1A, CP1B, XCP2 and CP2, whose activity is directly linked with salicylic-acid-associated plant defenses. Acts as a substrate mimicking molecule for apoplastic PLCPs and its processing releases the embedded inhibitor peptide PID14, which in turn blocks PLCPs to modulate host immunity. This chain is Secreted effector PIT2, found in Mycosarcoma maydis (Corn smut fungus).